Here is a 109-residue protein sequence, read N- to C-terminus: B melanoma antigen 2 (109 aa).

Residues 1–17 (MAAGVVFLALSAQLLQA) form the signal peptide.

The protein belongs to the BAGE family. Not expressed in normal tissues except in testis. Expressed in 22% of melanomas, in bladder and lung carcinomas.

The protein resides in the secreted. In terms of biological role, unknown. Candidate gene encoding tumor antigens. In Homo sapiens (Human), this protein is B melanoma antigen 2 (BAGE2).